Reading from the N-terminus, the 192-residue chain is Superoxide dismutase [Fe] (192 aa).

Residues H26, H73, D157, and H161 each coordinate Fe cation.

This sequence belongs to the iron/manganese superoxide dismutase family. As to quaternary structure, homodimer. Fe cation serves as cofactor.

It carries out the reaction 2 superoxide + 2 H(+) = H2O2 + O2. In terms of biological role, destroys superoxide anion radicals which are normally produced within the cells and which are toxic to biological systems. This chain is Superoxide dismutase [Fe], found in Pseudoalteromonas translucida (strain TAC 125).